The chain runs to 494 residues: 3-octaprenyl-4-hydroxybenzoate carboxy-lyase (494 aa).

Position 172 (Asn172) interacts with Mn(2+). Residues 175–177 (IYR), 189–191 (RWL), and 194–195 (RG) contribute to the prenylated FMN site. Glu238 contacts Mn(2+). Residue Asp287 is the Proton donor of the active site.

Belongs to the UbiD family. Homohexamer. It depends on prenylated FMN as a cofactor. The cofactor is Mn(2+).

The protein resides in the cell membrane. The enzyme catalyses a 4-hydroxy-3-(all-trans-polyprenyl)benzoate + H(+) = a 2-(all-trans-polyprenyl)phenol + CO2. It participates in cofactor biosynthesis; ubiquinone biosynthesis. In terms of biological role, catalyzes the decarboxylation of 3-octaprenyl-4-hydroxy benzoate to 2-octaprenylphenol, an intermediate step in ubiquinone biosynthesis. This is 3-octaprenyl-4-hydroxybenzoate carboxy-lyase from Escherichia coli O139:H28 (strain E24377A / ETEC).